A 325-amino-acid chain; its full sequence is DNA-directed RNA polymerase subunit alpha (325 aa).

Positions 1 to 238 (MSLKSLLKGF…EHLTVFINFE (238 aa)) are alpha N-terminal domain (alpha-NTD). The interval 255–325 (LKASLSKHVE…LGLSFGMRDF (71 aa)) is alpha C-terminal domain (alpha-CTD).

It belongs to the RNA polymerase alpha chain family. Homodimer. The RNAP catalytic core consists of 2 alpha, 1 beta, 1 beta' and 1 omega subunit. When a sigma factor is associated with the core the holoenzyme is formed, which can initiate transcription.

It carries out the reaction RNA(n) + a ribonucleoside 5'-triphosphate = RNA(n+1) + diphosphate. DNA-dependent RNA polymerase catalyzes the transcription of DNA into RNA using the four ribonucleoside triphosphates as substrates. The sequence is that of DNA-directed RNA polymerase subunit alpha from Leptospira interrogans serogroup Icterohaemorrhagiae serovar copenhageni (strain Fiocruz L1-130).